The following is a 181-amino-acid chain: Protein Syd (181 aa).

The protein belongs to the Syd family.

The protein localises to the cell inner membrane. Its function is as follows. Interacts with the SecY protein in vivo. May bind preferentially to an uncomplexed state of SecY, thus functioning either as a chelating agent for excess SecY in the cell or as a regulatory factor that negatively controls the translocase function. The polypeptide is Protein Syd (Klebsiella pneumoniae (strain 342)).